We begin with the raw amino-acid sequence, 145 residues long: UPF0201 protein LS215_1276 (145 aa).

It belongs to the UPF0201 family.

The chain is UPF0201 protein LS215_1276 from Saccharolobus islandicus (strain L.S.2.15 / Lassen #1) (Sulfolobus islandicus).